A 515-amino-acid polypeptide reads, in one-letter code: MTTEPGYLSPSVAVATSMPKRGVGAAVLIVPVVSTGEEDRPGAVVASAEPFLRADTVAEIEAGLRALDATGASDQVHRLAVPSLPVGSVLTVGLGKPRREWPADTIRCAAGVAARALNSSEAVITTLAELPGDGICSATVEGLILGSYRFSAFRSDKTAPKDAGLRKITVLCCAKDAKKRALHGAAVATAVATARDLVNTPPSHLFPAEFAKRAKTLSESVGLDVEVIDEKALKKAGYGGVIGVGQGSSRPPRLVRLIHRGSRLAKNPQKAKKVALVGKGITFDTGGISIKPAASMHHMTSDMGGAAAVIATVTLAARLRLPIDVIATVPMAENMPSATAQRPGDVLTQYGGTTVEVLNTDAEGRLILADAIVRACEDKPDYLIETSTLTGAQTVALGTRIPGVMGSDEFRDRVAAISQRVGENGWPMPLPDDLKDDLKSTVADLANVSGQRFAGMLVAGVFLREFVAESVDWAHIDVAGPAYNTGSAWGYTPKGATGVPTRTMFAVLEDIAKNG.

Positions 279 and 284 each coordinate Mn(2+). The active site involves lysine 291. Aspartate 302, aspartate 361, and glutamate 363 together coordinate Mn(2+). The active site involves arginine 365.

Belongs to the peptidase M17 family. Requires Mn(2+) as cofactor.

It localises to the cytoplasm. The enzyme catalyses Release of an N-terminal amino acid, Xaa-|-Yaa-, in which Xaa is preferably Leu, but may be other amino acids including Pro although not Arg or Lys, and Yaa may be Pro. Amino acid amides and methyl esters are also readily hydrolyzed, but rates on arylamides are exceedingly low.. It catalyses the reaction Release of an N-terminal amino acid, preferentially leucine, but not glutamic or aspartic acids.. Presumably involved in the processing and regular turnover of intracellular proteins. Catalyzes the removal of unsubstituted N-terminal amino acids from various peptides. This chain is Probable cytosol aminopeptidase, found in Mycobacterium tuberculosis (strain ATCC 25177 / H37Ra).